The chain runs to 201 residues: Cutinase (201 aa).

Residues 1 to 20 (MKTSAQQLLSLLLLPLSAIA) form the signal peptide. An intrachain disulfide couples cysteine 31 to cysteine 105. Serine 116 serves as the catalytic Nucleophile. Cysteine 164 and cysteine 171 are disulfide-bonded. Aspartate 168 is a catalytic residue. The Proton donor/acceptor role is filled by histidine 181.

The protein belongs to the cutinase family. In terms of processing, the 2 disulfide bonds play a critical role in holding the catalytic residues in juxta-position; reduction of the disulfide bridges results in the complete inactivation of the enzyme.

The protein resides in the secreted. It catalyses the reaction cutin + H2O = cutin monomers.. In terms of biological role, catalyzes the hydrolysis of complex carboxylic polyesters found in the cell wall of plants. Degrades cutin, a macromolecule that forms the structure of the plant cuticle. Allows pathogenic fungi to penetrate through the cuticular barrier into the host plant during the initial stage of fungal infection. This Monilinia fructicola (Brown rot fungus) protein is Cutinase (CUT1).